Consider the following 111-residue polypeptide: Universal stress protein B (111 aa).

A run of 2 helical transmembrane segments spans residues 1–21 and 90–110; these read MIST…NMAR and FILT…LAIW.

It belongs to the universal stress protein B family.

The protein resides in the cell inner membrane. The chain is Universal stress protein B from Erwinia tasmaniensis (strain DSM 17950 / CFBP 7177 / CIP 109463 / NCPPB 4357 / Et1/99).